The chain runs to 49 residues: MWRRRREPWEELSFLLNSLSPRNWFIRRWGLMAGRGQHLCWLRCACDGP.

This is an uncharacterized protein from Saccharomyces cerevisiae (strain ATCC 204508 / S288c) (Baker's yeast).